A 2548-amino-acid polypeptide reads, in one-letter code: Unconventional myosin-IXa (2548 aa).

One can recognise a Ras-associating domain in the interval 14-112 (NEHTLRIYPG…YRFLLREKNL (99 aa)). Positions 146 to 1016 (KDFDDLCSLP…ERQHLQDLLH (871 aa)) constitute a Myosin motor domain. The chain crosses the membrane as a helical span at residues 175 to 195 (IYTYVGSILIVINPFKFLPIY). Residue 239–246 (GESGSGKT) coordinates ATP. Residue Ser-755 is modified to Phosphoserine. The tract at residues 898-920 (LSKLMETLGQAEPYFVKCIRSNA) is actin-binding. 5 consecutive IQ domains span residues 1021–1041 (RRII…HFLH), 1042–1071 (LRQA…QKDA), 1074–1103 (MASA…AAIV), 1115–1144 (RHMA…KIIL), and 1138–1167 (QRKK…QRLR). The interval 1021 to 1162 (RRIILLQRWF…RARQRFKALK (142 aa)) is neck or regulatory domain. Residues 1163–2511 (EQRLRETKPE…LKNVKNSPQK (1349 aa)) are tail. The segment covering 1223–1236 (SVDCLKESPNKQQE) has biased composition (basic and acidic residues). The interval 1223 to 1250 (SVDCLKESPNKQQERAQSQSGVDLQEDV) is disordered. Phosphoserine occurs at positions 1242 and 1258. Positions 1264–1291 (QKKVGRAKRESRRMRELEQAIFSLELLK) form a coiled coil. Phosphoserine is present on residues Ser-1299 and Ser-1317. A disordered region spans residues 1299–1386 (SPSEDRRWST…SNETSSAEHL (88 aa)). Composition is skewed to low complexity over residues 1324–1337 (SESS…LSYE) and 1356–1366 (FPSPKISSSPK). Ser-1364 is modified (phosphoserine). Polar residues predominate over residues 1372–1381 (NALSASNETS). Residues 1486 to 1532 (VLKKLEKLNTEKEERQKQLQQQNEKEMMEQIRQQTDILEKERKAFKT) adopt a coiled-coil conformation. Positions 1804-1836 (YHPTPPLSPELPGSCRKEFKENKEPSPKAKRKR) are disordered. The segment covering 1818-1830 (CRKEFKENKEPSP) has biased composition (basic and acidic residues). Ser-1948 is modified (phosphoserine). 2 Phorbol-ester/DAG-type zinc fingers span residues 1999-2048 (GHIF…TAKC) and 2068-2119 (LTSE…DAES). Positions 2063-2251 (VELSRLTSED…LIVVEQMNKY (189 aa)) constitute a Rho-GAP domain. Position 2294 is a phosphoserine (Ser-2294). The stretch at 2315 to 2358 (AAMETDITEQQQAAMQQEERVLTEQIENLQKEKEELTFEMLVLE) forms a coiled coil. Disordered regions lie at residues 2359 to 2383 (PRAS…ENLN) and 2401 to 2424 (SSLK…KQQD). Ser-2464 bears the Phosphoserine mark. Positions 2490–2531 (RGTFNPEKGKQKLKNVKNSPQKTKETPEGTVMSGRRKTVDPD) are disordered.

Belongs to the TRAFAC class myosin-kinesin ATPase superfamily. Myosin family. Post-translationally, phosphorylated by ALPK1 following monosodium urate monohydrate (MSU)-induced inflammation. Found to be expressed in testis and placenta and at lower levels in all the examined tissues with the exception of liver. Isoform 5: Found in leukocytes but not in brain, retina or testis.

It localises to the membrane. It is found in the cytoplasm. Its subcellular location is the synapse. The protein resides in the cell projection. The protein localises to the growth cone. In terms of biological role, myosins are actin-based motor molecules with ATPase activity. Unconventional myosins serve in intracellular movements. Regulates Rho by stimulating it's GTPase activity in neurons. Required for the regulation of neurite branching and motor neuron axon guidance. This Homo sapiens (Human) protein is Unconventional myosin-IXa (MYO9A).